Here is a 185-residue protein sequence, read N- to C-terminus: Ribosome-recycling factor (185 aa).

Positions 128-158 (VRNTRQDANNKVKKLEKDKEISEDESKKAQE) are disordered.

It belongs to the RRF family.

It is found in the cytoplasm. In terms of biological role, responsible for the release of ribosomes from messenger RNA at the termination of protein biosynthesis. May increase the efficiency of translation by recycling ribosomes from one round of translation to another. This is Ribosome-recycling factor from Helicobacter pylori (strain J99 / ATCC 700824) (Campylobacter pylori J99).